A 203-amino-acid polypeptide reads, in one-letter code: LexA repressor 2 (203 aa).

The H-T-H motif DNA-binding region spans 28–48 (MREIARHLNVNGTLGVAKHLE). Catalysis depends on for autocatalytic cleavage activity residues Ser-122 and Lys-159.

Belongs to the peptidase S24 family. As to quaternary structure, homodimer.

It catalyses the reaction Hydrolysis of Ala-|-Gly bond in repressor LexA.. Represses a number of genes involved in the response to DNA damage (SOS response), including recA and lexA. In the presence of single-stranded DNA, RecA interacts with LexA causing an autocatalytic cleavage which disrupts the DNA-binding part of LexA, leading to derepression of the SOS regulon and eventually DNA repair. The sequence is that of LexA repressor 2 from Geobacter sulfurreducens (strain ATCC 51573 / DSM 12127 / PCA).